The chain runs to 426 residues: UDP-N-acetylglucosamine 1-carboxyvinyltransferase (426 aa).

Position 22–23 (22–23 (KN)) interacts with phosphoenolpyruvate. Arg-93 is a UDP-N-acetyl-alpha-D-glucosamine binding site. Cys-117 serves as the catalytic Proton donor. Cys-117 is modified (2-(S-cysteinyl)pyruvic acid O-phosphothioketal). UDP-N-acetyl-alpha-D-glucosamine-binding positions include 162–165 (KVSV), Asp-307, and Ile-329.

It belongs to the EPSP synthase family. MurA subfamily.

Its subcellular location is the cytoplasm. The enzyme catalyses phosphoenolpyruvate + UDP-N-acetyl-alpha-D-glucosamine = UDP-N-acetyl-3-O-(1-carboxyvinyl)-alpha-D-glucosamine + phosphate. The protein operates within cell wall biogenesis; peptidoglycan biosynthesis. Cell wall formation. Adds enolpyruvyl to UDP-N-acetylglucosamine. This is UDP-N-acetylglucosamine 1-carboxyvinyltransferase from Haemophilus ducreyi (strain 35000HP / ATCC 700724).